A 199-amino-acid chain; its full sequence is Nucleoside triphosphate pyrophosphatase (199 aa).

Aspartate 72 (proton acceptor) is an active-site residue.

Belongs to the Maf family. A divalent metal cation serves as cofactor.

Its subcellular location is the cytoplasm. The catalysed reaction is a ribonucleoside 5'-triphosphate + H2O = a ribonucleoside 5'-phosphate + diphosphate + H(+). It catalyses the reaction a 2'-deoxyribonucleoside 5'-triphosphate + H2O = a 2'-deoxyribonucleoside 5'-phosphate + diphosphate + H(+). Its function is as follows. Nucleoside triphosphate pyrophosphatase. May have a dual role in cell division arrest and in preventing the incorporation of modified nucleotides into cellular nucleic acids. The sequence is that of Nucleoside triphosphate pyrophosphatase from Synechococcus elongatus (strain ATCC 33912 / PCC 7942 / FACHB-805) (Anacystis nidulans R2).